We begin with the raw amino-acid sequence, 336 residues long: Palmitoyltransferase SWF1 (336 aa).

Over 1-2 the chain is Lumenal; that stretch reads MS. The helical transmembrane segment at 3-23 threads the bilayer; sequence WNLLFVLLIGFVVLILLSPVF. Residues 24 to 50 lie on the Cytoplasmic side of the membrane; sequence KSTWPFSTFYRNVFQPFLVDDQKYRWK. A helical membrane pass occupies residues 51–71; it reads LHLVPLFYTSIYLYLVYTYHM. Residues 72–86 lie on the Lumenal side of the membrane; sequence RVESTIKNELFLLER. Residues 87-107 traverse the membrane as a helical segment; sequence ILIVPIIILPPVALGILAMVS. The Cytoplasmic segment spans residues 108-179; it reads RAEDSKDHKS…CIGKGNYLQF (72 aa). In terms of domain architecture, DHHC spans 134-184; that stretch reads IKCSTCRIVKPARSKHCSICNRCVLVADHHCIWINNCIGKGNYLQFYLFLI. A helical transmembrane segment spans residues 180–200; the sequence is YLFLISNIFSMCYAFLRLWYI. Topologically, residues 201 to 216 are lumenal; it reads SLNSTSTLPRAVLTLT. Residues 217 to 237 form a helical membrane-spanning segment; sequence ILCGCFTIICAIFTYLQLAIV. At 238–336 the chain is on the cytoplasmic side; sequence KEGMTTNEQD…TFLANLTDLI (99 aa).

Belongs to the DHHC palmitoyltransferase family. SWF1 subfamily.

It localises to the endoplasmic reticulum membrane. It catalyses the reaction L-cysteinyl-[protein] + hexadecanoyl-CoA = S-hexadecanoyl-L-cysteinyl-[protein] + CoA. Palmitoyltransferase that targets several endosomal SNAREs. Palmitoylates the SNAREs SNC1, SNC2, SYN8 and TLG1, at cysteine residues close to the cytoplasmic end of their transmembrane domain. May have a role in the cellular quality control of transmembrane domain-containing proteins. This is Palmitoyltransferase SWF1 (SWF1) from Saccharomyces cerevisiae (strain ATCC 204508 / S288c) (Baker's yeast).